Here is a 238-residue protein sequence, read N- to C-terminus: Ribonuclease PH (238 aa).

Residues Arg-86 and 124-126 (GTR) contribute to the phosphate site.

It belongs to the RNase PH family. As to quaternary structure, homohexameric ring arranged as a trimer of dimers.

It catalyses the reaction tRNA(n+1) + phosphate = tRNA(n) + a ribonucleoside 5'-diphosphate. In terms of biological role, phosphorolytic 3'-5' exoribonuclease that plays an important role in tRNA 3'-end maturation. Removes nucleotide residues following the 3'-CCA terminus of tRNAs; can also add nucleotides to the ends of RNA molecules by using nucleoside diphosphates as substrates, but this may not be physiologically important. Probably plays a role in initiation of 16S rRNA degradation (leading to ribosome degradation) during starvation. The protein is Ribonuclease PH of Histophilus somni (strain 2336) (Haemophilus somnus).